Here is a 390-residue protein sequence, read N- to C-terminus: Deoxyhypusine synthase-like protein (390 aa).

This sequence belongs to the deoxyhypusine synthase family.

This Nostoc punctiforme (strain ATCC 29133 / PCC 73102) protein is Deoxyhypusine synthase-like protein.